An 828-amino-acid chain; its full sequence is Translation initiation factor IF-2 (828 aa).

Disordered regions lie at residues 48–76 (SYSG…SEEF) and 112–148 (ASQE…ESTL). Polar residues predominate over residues 49 to 58 (YSGSTTTLSL). Low complexity predominate over residues 65–74 (LETGSSSGSE). The span at 116 to 126 (DPIEVEQEESS) shows a compositional bias: acidic residues. The span at 127–144 (DTNKVKEEPKIEEVKDIE) shows a compositional bias: basic and acidic residues. Residues 326–496 (SRAPVVTVMG…LLIAEMQNLK (171 aa)) form the tr-type G domain. The interval 335–342 (GHVDHGKT) is G1. GTP is bound at residue 335–342 (GHVDHGKT). A G2 region spans residues 360–364 (GITQH). Positions 382-385 (DTPG) are G3. Residues 382-386 (DTPGH) and 436-439 (NKID) contribute to the GTP site. Residues 436 to 439 (NKID) form a G4 region. Residues 472 to 474 (SAL) are G5.

This sequence belongs to the TRAFAC class translation factor GTPase superfamily. Classic translation factor GTPase family. IF-2 subfamily.

The protein resides in the cytoplasm. Its function is as follows. One of the essential components for the initiation of protein synthesis. Protects formylmethionyl-tRNA from spontaneous hydrolysis and promotes its binding to the 30S ribosomal subunits. Also involved in the hydrolysis of GTP during the formation of the 70S ribosomal complex. This is Translation initiation factor IF-2 from Rickettsia bellii (strain OSU 85-389).